Here is a 106-residue protein sequence, read N- to C-terminus: MIITTTPTIEGKRIVRYCGVVAGEAILGANLFKDLFANIRDMVGGRSATYERELQRARDIALRELEERAEELGATAVVGVDLDYEVMGQGNGMLMVSASGTAVVVE.

Belongs to the UPF0145 family.

The chain is UPF0145 protein GSU2791 from Geobacter sulfurreducens (strain ATCC 51573 / DSM 12127 / PCA).